A 338-amino-acid chain; its full sequence is Anthranilate phosphoribosyltransferase (338 aa).

5-phospho-alpha-D-ribose 1-diphosphate contacts are provided by residues Gly78, Gly81 to Asp82, Ser86, Asn88 to Thr91, Lys106 to Ser114, and Ser118. Gly78 is a binding site for anthranilate. Mg(2+) is bound at residue Ser90. Asn109 lines the anthranilate pocket. An anthranilate-binding site is contributed by Arg163. Asp222 and Glu223 together coordinate Mg(2+).

The protein belongs to the anthranilate phosphoribosyltransferase family. As to quaternary structure, homodimer. It depends on Mg(2+) as a cofactor.

It catalyses the reaction N-(5-phospho-beta-D-ribosyl)anthranilate + diphosphate = 5-phospho-alpha-D-ribose 1-diphosphate + anthranilate. It functions in the pathway amino-acid biosynthesis; L-tryptophan biosynthesis; L-tryptophan from chorismate: step 2/5. Its function is as follows. Catalyzes the transfer of the phosphoribosyl group of 5-phosphorylribose-1-pyrophosphate (PRPP) to anthranilate to yield N-(5'-phosphoribosyl)-anthranilate (PRA). The sequence is that of Anthranilate phosphoribosyltransferase from Staphylococcus saprophyticus subsp. saprophyticus (strain ATCC 15305 / DSM 20229 / NCIMB 8711 / NCTC 7292 / S-41).